Reading from the N-terminus, the 195-residue chain is Putative EGF-like and EMI domain-containing protein 1 (195 aa).

The region spanning 86–97 is the EGF-like domain; sequence CTCKSGYQGNRC.

The chain is Putative EGF-like and EMI domain-containing protein 1 (EGFEM1P) from Homo sapiens (Human).